The following is a 173-amino-acid chain: Translation initiation factor IF-3 (173 aa).

The protein belongs to the IF-3 family. In terms of assembly, monomer.

It localises to the cytoplasm. IF-3 binds to the 30S ribosomal subunit and shifts the equilibrium between 70S ribosomes and their 50S and 30S subunits in favor of the free subunits, thus enhancing the availability of 30S subunits on which protein synthesis initiation begins. The sequence is that of Translation initiation factor IF-3 from Neisseria gonorrhoeae (strain ATCC 700825 / FA 1090).